Here is an 896-residue protein sequence, read N- to C-terminus: Histone-lysine N-methyltransferase CLF (896 aa).

Disordered regions lie at residues 344–419 (DNLK…NRRI) and 459–514 (SGIK…DGCD). The segment covering 358–390 (GSSGQKTKSQQSESSSTARVSSESSESEVQLLS) has biased composition (low complexity). Polar residues-rich tracts occupy residues 391 to 400 (NKSPQHSPGL), 465 to 476 (VVSSQCNSPSTR), and 485 to 498 (QMENNSSFVDAQSD). Basic and acidic residues predominate over residues 504–514 (NNEHSATDGCD). The CXC domain occupies 633–732 (RKRITERKDQ…TLGVPNQRGD (100 aa)). Positions 747–862 (QRVLLGRSDV…AGEELFYDYR (116 aa)) constitute an SET domain. Position 861 (Tyr-861) interacts with S-adenosyl-L-methionine. Positions 869–884 (PAWARKPEGPGAKDDA) are enriched in basic and acidic residues. Residues 869–896 (PAWARKPEGPGAKDDAQPSTGRAKKLAH) form a disordered region.

The protein belongs to the class V-like SAM-binding methyltransferase superfamily. Histone-lysine methyltransferase family. EZ subfamily. Interacts with FIE1. Component of the polycomb repressive complex 2 (PRC2), composed of the core PRC2 components FIE2, EMF2B and EZ1. PRC2 methylates 'Lys-27' residues of histone H3 (H3K27me3), leading to transcriptional repression of the affected target gene. In terms of tissue distribution, widely expressed. Highly expressed in young panicle.

It catalyses the reaction L-lysyl(27)-[histone H3] + 3 S-adenosyl-L-methionine = N(6),N(6),N(6)-trimethyl-L-lysyl(27)-[histone H3] + 3 S-adenosyl-L-homocysteine + 3 H(+). Polycomb group (PcG) protein. Catalytic subunit of some PcG multiprotein complex, which methylates 'Lys-27' of histone H3, leading to transcriptional repression of the affected target genes. PcG proteins act by forming multiprotein complexes, which are required to maintain the transcriptionally repressive state of homeotic genes throughout development. PcG proteins are not required to initiate repression, but to maintain it during later stages of development. Involved in the regulation of flowering. Represses flowering under long day (LD) conditions. Regulates the trimethylation on histone H3 'Lys-27' (H3K27me3) of the flowering regulators MADS14, MADS15, RFT1, EHD1, HD3A and LF. In Oryza sativa subsp. japonica (Rice), this protein is Histone-lysine N-methyltransferase CLF.